Reading from the N-terminus, the 192-residue chain is UPF0312 protein PputW619_0484 (192 aa).

The N-terminal stretch at 1-23 (MLKKTFAALALGTALLSAGQAMA) is a signal peptide.

It belongs to the UPF0312 family. Type 1 subfamily.

It localises to the periplasm. This chain is UPF0312 protein PputW619_0484, found in Pseudomonas putida (strain W619).